We begin with the raw amino-acid sequence, 401 residues long: ATP phosphoribosyltransferase regulatory subunit (401 aa).

It belongs to the class-II aminoacyl-tRNA synthetase family. HisZ subfamily. Heteromultimer composed of HisG and HisZ subunits.

It localises to the cytoplasm. Its pathway is amino-acid biosynthesis; L-histidine biosynthesis; L-histidine from 5-phospho-alpha-D-ribose 1-diphosphate: step 1/9. In terms of biological role, required for the first step of histidine biosynthesis. May allow the feedback regulation of ATP phosphoribosyltransferase activity by histidine. This Cyanothece sp. (strain PCC 7425 / ATCC 29141) protein is ATP phosphoribosyltransferase regulatory subunit.